The chain runs to 758 residues: MTILNHTLGFPRVGLKRELKKAQESYWAGNSTQEELLNVGRELRARHWQQQQQAGVDLVPVGDFAWYDHVLTTSLLLGNVPERHQNADGSIDIDTLFRIGRGRAPTGKPAAAAEMTKWFNTNYHYMVPEFQQGQQFKLGWTQLLDEVDEALALGHKIKPVLLGPITYLWLGKVKGEQFDRLSLLNDILPVYQQVLAELAKRGIEWVQIDEPALVLELPQEWLDAYQPAYQALQGQVKLLLTTYFDSIGHNIDTIRALPVQGLHVDVVAGHDDLAVLNKNLPKEWLLSLGVINGRNVWRADLSSWFERLQPLVNSRPLWLGSSCSLLHSPIDLNEETRLDAEVKSWFAFALQKCAELALLTQALNAPNDAKLAELAAYSAPIRARRSSSRVHNAQVEQRLAAITSQDIERQLPYEARAETQRKRFNLPAWPTTTIGSFPQTTEIRGLRLDFKQGRLDGKNYRTGISEHIKHAIAEQERLGLDVLVHGEAERNDMVEYFGEHLDGFVFTQNGWVQSYGSRCVKPPVIIGDISRPEAITVEWAKYAQSLTEKPVKGMLTGPVTILCWSFPREDVSRETIAKQIALALRDEVEDLEKAGIGIIQIDEPALREGLPLRRADWQAYLQWAVDAFKLNAAVAQNDTQIHTHMCYCEFNDIMDSIAALDADVITIETSRSDMELLESFEDFAYPNEIGPGVYDIHSPNVPSVEWIEALLRKAAQRIPAERLWVNPDCGLKTRGWPETRQALANMVLAAQRLREEQV.

Residues 17-20 (RELK) and Lys117 contribute to the 5-methyltetrahydropteroyltri-L-glutamate site. L-homocysteine contacts are provided by residues 434-436 (IGS) and Glu487. L-methionine is bound by residues 434–436 (IGS) and Glu487. 5-methyltetrahydropteroyltri-L-glutamate is bound by residues 518–519 (RC) and Trp564. Asp602 lines the L-homocysteine pocket. Asp602 provides a ligand contact to L-methionine. A 5-methyltetrahydropteroyltri-L-glutamate-binding site is contributed by Glu608. Zn(2+) contacts are provided by His644, Cys646, and Glu668. Residue His697 is the Proton donor of the active site. Cys729 contributes to the Zn(2+) binding site.

The protein belongs to the vitamin-B12 independent methionine synthase family. The cofactor is Zn(2+).

It carries out the reaction 5-methyltetrahydropteroyltri-L-glutamate + L-homocysteine = tetrahydropteroyltri-L-glutamate + L-methionine. It functions in the pathway amino-acid biosynthesis; L-methionine biosynthesis via de novo pathway; L-methionine from L-homocysteine (MetE route): step 1/1. Functionally, catalyzes the transfer of a methyl group from 5-methyltetrahydrofolate to homocysteine resulting in methionine formation. This chain is 5-methyltetrahydropteroyltriglutamate--homocysteine methyltransferase, found in Yersinia pestis (strain Pestoides F).